A 511-amino-acid polypeptide reads, in one-letter code: Phosphoenolpyruvate carboxylase (511 aa).

Belongs to the PEPCase type 2 family. As to quaternary structure, homotetramer. Requires Mg(2+) as cofactor.

The catalysed reaction is oxaloacetate + phosphate = phosphoenolpyruvate + hydrogencarbonate. Functionally, catalyzes the irreversible beta-carboxylation of phosphoenolpyruvate (PEP) to form oxaloacetate (OAA), a four-carbon dicarboxylic acid source for the tricarboxylic acid cycle. The chain is Phosphoenolpyruvate carboxylase from Saccharolobus islandicus (strain M.16.27) (Sulfolobus islandicus).